Consider the following 252-residue polypeptide: Neurovirulence factor ICP34.5 (252 aa).

Residues 1 to 15 (MARRRRRHRGPRRPR) show a composition bias toward basic residues. A required for nucleolar localization region spans residues 1–17 (MARRRRRHRGPRRPRPP). Disordered regions lie at residues 1–129 (MARR…PFRL) and 150–179 (RRAG…PATP). Residues 25-36 (TAQSQVTSTPNS) are compositionally biased toward polar residues. Positions 46-59 (AAPPPPPAGGPPPS) are enriched in pro residues. The segment covering 74 to 84 (ASDDDDDDDWP) has biased composition (acidic residues). Composition is skewed to pro residues over residues 85–94 (DSPPPEPAPE) and 120–129 (SHPPSRPFRL). A Nuclear export signal motif is present at residues 129-138 (LPPRLALRLR). Tandem repeats lie at residues 162 to 164 (ATP), 165 to 167 (ATP), 168 to 170 (ATP), 171 to 173 (ATP), 174 to 176 (ATP), and 177 to 179 (ATP). The segment at 162–179 (ATPATPATPATPATPATP) is 6 X 3 AA tandem repeats of A-T-P. Residues 165–179 (ATPATPATPATPATP) show a composition bias toward low complexity. A binding to PP1CA region spans residues 179 to 192 (PARVRFSPHVRVRH). The interaction with host PPP1CA stretch occupies residues 179 to 192 (PARVRFSPHVRVRH). Residues 194–252 (VVWASAARLARRGSWARERADRARFRRRVAEAEAVIGPCLGPKARARALARGAGPANSV) form an important for interferon resistance region. The short motif at 204–222 (RRGSWARERADRARFRRRV) is the Bipartite nuclear localization signal element. The interval 222–237 (VAEAEAVIGPCLGPKA) is interaction with host EIF2S1/EIF-2ALPHA.

It belongs to the PPP1R15 family. Interacts with host PPP1CA to form a high-molecular-weight complex that dephosphorylates EIF2S1/eIF-2alpha. Interacts with host EIF2S1/eIF-2alpha; this interaction is crucial for the specific dephosphorylation of EIF2S1/eIF-2alpha by PPP1CA. Binds to proliferating cell nuclear antigen (PCNA), which may release host cells from growth arrest and facilitate viral replication. Interacts (via N-terminus) with host C1QBP and PRKCA. Interacts with protein UL31. Interacts with host TBK1. Interacts with host STING/TMEM173; this interaction inhibits the intracellular DNA sensing pathway. Interacts with host BECN1; this interaction modulates host autophagy.

Its subcellular location is the host cytoplasm. The protein resides in the host nucleus. The protein localises to the host nucleolus. It localises to the virion. In terms of biological role, inhibits the establishment of the immune response and of the integrated stress response (ISR) in the infected cell. Plays essential roles in viral nuclear egress to mediate capsid transit across the nuclear membrane. Facilitates nuclear egress cooperatively with host C1QBP and protein kinase C/PKC to induce lamin A/C phosphorylation and subsequent reorganization. In turn, lamina disassembles and nuclear egress occurs. Recruits the serine/threonine protein phosphatase PPP1CA/PP1-alpha to dephosphorylate the translation initiation factor EIF2S1/eIF-2alpha, thereby couteracting the host shutoff of protein synthesis involving double-stranded RNA-dependent protein kinase EIF2AK2/PKR. In turn, controls host IRF3 activation and subsequently inhibits host interferon response. Controls the DNA sensing pathway by interacting with and inhibiting host STING/TMEM173. Also down-modulates the host MHC class II proteins cell surface expression. Acts as a neurovirulence factor that has a profound effect on the growth of the virus in central nervous system tissue, by interacting with host BECN1 and thereby antagonizing the host autophagy response. In Human herpesvirus 1 (strain CVG-2) (HHV-1), this protein is Neurovirulence factor ICP34.5 (RL1).